The following is a 350-amino-acid chain: Small ribosomal subunit biogenesis GTPase RsgA (350 aa).

Residues 1–17 show a composition bias toward polar residues; it reads MSKNKLSKGQQRRVNAN. A disordered region spans residues 1–33; that stretch reads MSKNKLSKGQQRRVNANHQRRLKTSKEKPDYDD. One can recognise a CP-type G domain in the interval 104–273; that stretch reads TSVLTRPDFY…VIDSPGVREF (170 aa). Residues 160-163 and 214-222 contribute to the GTP site; these read NKID and GQSGVGKSS. Positions 297, 302, 304, and 310 each coordinate Zn(2+).

The protein belongs to the TRAFAC class YlqF/YawG GTPase family. RsgA subfamily. In terms of assembly, monomer. Associates with 30S ribosomal subunit, binds 16S rRNA. It depends on Zn(2+) as a cofactor.

Its subcellular location is the cytoplasm. In terms of biological role, one of several proteins that assist in the late maturation steps of the functional core of the 30S ribosomal subunit. Helps release RbfA from mature subunits. May play a role in the assembly of ribosomal proteins into the subunit. Circularly permuted GTPase that catalyzes slow GTP hydrolysis, GTPase activity is stimulated by the 30S ribosomal subunit. This is Small ribosomal subunit biogenesis GTPase RsgA from Shigella boydii serotype 18 (strain CDC 3083-94 / BS512).